A 229-amino-acid chain; its full sequence is Demethylmenaquinone methyltransferase (229 aa).

S-adenosyl-L-methionine is bound by residues threonine 57, aspartate 77, and 101-102 (DV).

Belongs to the class I-like SAM-binding methyltransferase superfamily. MenG/UbiE family.

The enzyme catalyses a 2-demethylmenaquinol + S-adenosyl-L-methionine = a menaquinol + S-adenosyl-L-homocysteine + H(+). It functions in the pathway quinol/quinone metabolism; menaquinone biosynthesis; menaquinol from 1,4-dihydroxy-2-naphthoate: step 2/2. Methyltransferase required for the conversion of demethylmenaquinol (DMKH2) to menaquinol (MKH2). The protein is Demethylmenaquinone methyltransferase of Chlamydia trachomatis serovar A (strain ATCC VR-571B / DSM 19440 / HAR-13).